The primary structure comprises 800 residues: MSSNYVPPDVSRSKAKEIALVNKAIQLANQGDYDEALNIIDQLPPSDNTRQVKAYILVKKYLDLLKDTNTPLKDRINYANQLVAISQRYPNVFSPQDAENIVEYLKEEEKVKELLNKLNDALSQADYNLALQYAKQLNDILNNTQTNNLVKALQIVASVPPPPTPEGTITSFLSQLVDYYKNASQAYSEASKYEPMFRPVADTLSTSAEMLEELLTNVNQILTTHSVSNAEDALKNIENIVNESKSLPIAPITEDILNIAEEMVKQIQIDNEANQYLHSSVKALDEGDYTKAYEDAEKATELLGPNAPQSVKNYTNALAILTKTEPLPSPPSQIKGMQDLLSYFSNVGNALSKNYELTSKASSIYPAFKPIAEAYALHLKDNNHLVDALSKINKKPPKNSDQFAFMSAVLKQISQETAPQNFVTQTYQQIGSQLSTATSESANQYSLLAEANNLIDQANAVITQVNNMMNNANNLSLGEVSQLYKNAADTLEKQALPPMQEAYKILQELAKQGAINQDSVNQVEENIQNIQNTITEFDMLSTAYEYLDQANAVITQVNNMMNNANNLSLGEVSQLYKNAADTLEKQALPPMQEAYKILQELAKQGAINQDSVNQVEENIQNIQNTITEFNLLAVAYGYMNEGYNQLQKLSNVSSPSQGVIIARSAKHYFEQASREFERANVNPNPAKPAIEQATDLILGFDELEKAQNTIAPERKHIAGARPPNPPTNAELAKYYEQLSNAYNTAAEYAYNAEKYFAEAESIAESESETTESENNETTESTANSEGEKQEGEHGARLIRV.

Coiled coils occupy residues 98 to 130 (AENIVEYLKEEEKVKELLNKLNDALSQADYNLA), 447 to 475 (LLAEANNLIDQANAVITQVNNMMNNANNL), 514 to 567 (AINQ…ANNL), and 606 to 633 (AINQDSVNQVEENIQNIQNTITEFNLLA). The interval 759–800 (AESIAESESETTESENNETTESTANSEGEKQEGEHGARLIRV) is disordered. The span at 761-776 (SIAESESETTESENNE) shows a compositional bias: acidic residues. The span at 785-800 (EGEKQEGEHGARLIRV) shows a compositional bias: basic and acidic residues.

The protein localises to the virion. This chain is Structural protein ORF800, found in Acidianus convivator (ATV).